The chain runs to 345 residues: Putative [LysW]-L-2-aminoadipate/[LysW]-L-glutamate phosphate reductase (345 aa).

11–14 provides a ligand contact to NADP(+); that stretch reads SGFT. The disordered stretch occupies residues 34 to 56; it reads TSRSKENKTIGHSHPNLRHSDLR. The active site involves cysteine 146. An NADP(+)-binding site is contributed by asparagine 309.

It belongs to the NAGSA dehydrogenase family. Type 1 subfamily. LysY sub-subfamily.

It is found in the cytoplasm. The catalysed reaction is [amino-group carrier protein]-C-terminal-N-(1-carboxy-5-oxopentan-1-yl)-L-glutamine + phosphate + NADP(+) = [amino-group carrier protein]-C-terminal-N-(1-carboxy-5-phosphooxy-5-oxopentan-1-yl)-L-glutamine + NADPH + H(+). It carries out the reaction [amino-group carrier protein]-C-terminal-gamma-(L-glutamyl-5-semialdehyde)-L-glutamate + phosphate + NADP(+) = [amino-group carrier protein]-C-terminal-gamma-(5-phospho-L-glutamyl)-L-glutamate + NADPH + H(+). It functions in the pathway amino-acid biosynthesis; L-lysine biosynthesis via AAA pathway; L-lysine from L-alpha-aminoadipate (Thermus route): step 3/5. Its pathway is amino-acid biosynthesis; L-arginine biosynthesis. Functionally, involved in both the arginine and lysine biosynthetic pathways. This is Putative [LysW]-L-2-aminoadipate/[LysW]-L-glutamate phosphate reductase from Haloarcula marismortui (strain ATCC 43049 / DSM 3752 / JCM 8966 / VKM B-1809) (Halobacterium marismortui).